We begin with the raw amino-acid sequence, 151 residues long: Ribosome maturation factor RimP (151 aa).

The protein belongs to the RimP family.

It is found in the cytoplasm. Functionally, required for maturation of 30S ribosomal subunits. The polypeptide is Ribosome maturation factor RimP (Aliivibrio fischeri (strain MJ11) (Vibrio fischeri)).